The sequence spans 570 residues: High-affinity hexose transporter HXT6 (570 aa).

Topologically, residues 1-60 are cytoplasmic; the sequence is MSQDAAIAEQTPVEHLSAVDSASHSVLSTPSNKAERDEIKAYGEGEEHEPVVEIPKRPAS. Residues 61–81 traverse the membrane as a helical segment; that stretch reads AYVTVSIMCIMIAFGGFVFGW. Topologically, residues 82 to 116 are extracellular; it reads DTGTISGFINQTDFIRRFGMKHKDGTNYLSKVRTG. An N-linked (GlcNAc...) asparagine glycan is attached at asparagine 91. Residues 117–137 form a helical membrane-spanning segment; sequence LIVSIFNIGCAIGGIILSKLG. The Cytoplasmic segment spans residues 138–143; sequence DMYGRK. The helical transmembrane segment at 144-164 threads the bilayer; that stretch reads VGLIVVVVIYIIGIIIQIASI. The Extracellular portion of the chain corresponds to 165-174; that stretch reads NKWYQYFIGR. A helical membrane pass occupies residues 175–195; the sequence is IISGLGVGGIAVLSPMLISEV. Residues 196–201 lie on the Cytoplasmic side of the membrane; it reads SPKHLR. Residues 202–222 traverse the membrane as a helical segment; that stretch reads GTLVSCYQLMITAGIFLGYCT. The Extracellular portion of the chain corresponds to 223–236; the sequence is NFGTKNYSNSVQWR. Asparagine 228 carries an N-linked (GlcNAc...) asparagine glycan. A helical transmembrane segment spans residues 237 to 257; sequence VPLGLCFAWALFMIGGMTFVP. Over 258–340 the chain is Cytoplasmic; that stretch reads ESPRYLAEVG…IQSLQQLTGD (83 aa). The helical transmembrane segment at 341–357 threads the bilayer; sequence NYFFYYGTTIFKAVGLS. The Extracellular portion of the chain corresponds to 358–363; the sequence is DSFETS. Residues 364-381 form a helical membrane-spanning segment; the sequence is IVLGIVNFASTFVGIYVV. The Cytoplasmic segment spans residues 382–388; the sequence is ERYGRRT. The helical transmembrane segment at 389–409 threads the bilayer; it reads CLLWGAASMTACMVVYASVGV. The Extracellular portion of the chain corresponds to 410-431; that stretch reads TRLWPNGQDQPSSKGAGNCMIV. The chain crosses the membrane as a helical span at residues 432-452; that stretch reads FACFYIFCFATTWAPIPYVVV. The Cytoplasmic portion of the chain corresponds to 453–469; that stretch reads SETFPLRVKSKAMSIAT. Residues 470–490 traverse the membrane as a helical segment; that stretch reads AANWLWGFLIGFFTPFITGAI. Position 491 (asparagine 491) is a topological domain, extracellular. A helical transmembrane segment spans residues 492–512; sequence FYYGYVFMGCLVFMFFYVLLV. Residues 513–570 lie on the Cytoplasmic side of the membrane; it reads VPETKGLTLEEVNTMWEEGVLPWKSASWVPPSRRGANYDAEEMAHDDKPLYKRMFSTK. Lysine 560 is covalently cross-linked (Glycyl lysine isopeptide (Lys-Gly) (interchain with G-Cter in ubiquitin)).

This sequence belongs to the major facilitator superfamily. Sugar transporter (TC 2.A.1.1) family.

Its subcellular location is the membrane. Its function is as follows. High-affinity glucose transporter. This chain is High-affinity hexose transporter HXT6 (HXT6), found in Saccharomyces cerevisiae (strain ATCC 204508 / S288c) (Baker's yeast).